The chain runs to 218 residues: MDKKELAKMIDHTLLKPEANYEQIVKLCKEALEYGFASVCINPCYVNAAYQLLKGSDVKVCTVVGFPLGAATSETKTFEAVQAVNRGASEIDMVINVGYLKSGNHDYVEEDIKTLVNKINGRALVKVIIETCLLNDEEKIIACKLAKKAGAHFVKTSTGFNMSGATSEDVALMYDAVSPNLKVKASGGIRTYEDAIKMINAGASRIGASSSIKIINKK.

D92 serves as the catalytic Proton donor/acceptor. K155 serves as the catalytic Schiff-base intermediate with acetaldehyde. K184 (proton donor/acceptor) is an active-site residue.

Belongs to the DeoC/FbaB aldolase family. DeoC type 1 subfamily.

It localises to the cytoplasm. The enzyme catalyses 2-deoxy-D-ribose 5-phosphate = D-glyceraldehyde 3-phosphate + acetaldehyde. It functions in the pathway carbohydrate degradation; 2-deoxy-D-ribose 1-phosphate degradation; D-glyceraldehyde 3-phosphate and acetaldehyde from 2-deoxy-alpha-D-ribose 1-phosphate: step 2/2. Catalyzes a reversible aldol reaction between acetaldehyde and D-glyceraldehyde 3-phosphate to generate 2-deoxy-D-ribose 5-phosphate. This Clostridium kluyveri (strain NBRC 12016) protein is Deoxyribose-phosphate aldolase.